A 593-amino-acid polypeptide reads, in one-letter code: Mono(ADP-ribosyl)transferase SpvB (593 aa).

A disordered region spans residues 361–384; the sequence is PVNNMMPPPPPPPPPMMGGNSSRP. Residues 366 to 376 are compositionally biased toward pro residues; sequence MPPPPPPPPPM. Residues 375-578 enclose the TR mART core domain; the sequence is PMMGGNSSRP…LRLSDDATAD (204 aa). Catalysis depends on residues Arg473, Ser503, and Glu540.

The protein belongs to the SpvB family.

It is found in the secreted. It catalyses the reaction L-arginyl-[protein] + NAD(+) = N(omega)-(ADP-D-ribosyl)-L-arginyl-[protein] + nicotinamide + H(+). In terms of biological role, mono-ADP-ribosylates muscle and non-muscle actin. ADP-ribosylates Chinese hamster ovary and HeLa cell actin as well as rabbit muscle, porcine heart actin and non-muscle beta- and gamma-actin. ADP-ribosylation of actin prevents the polymerization of G actin to F actin, causing actin filament depolymerization, destruction of the cytoskeleton and cytotoxicity; this requires only the C-terminal 120 residues. Does not possess NAD(+)-glycohydrolase activity, unlike most mART enzymes. In Salmonella dublin, this protein is Mono(ADP-ribosyl)transferase SpvB (spvB).